The sequence spans 319 residues: Ankyrin repeat domain-containing protein 1 (319 aa).

Residues Lys-61–Ile-89 adopt a coiled-coil conformation. ANK repeat units lie at residues Tyr-152–Phe-181, Leu-185–Ala-214, Leu-218–Ala-247, Glu-251–Ile-280, and Ala-284–Arg-315.

Interacts with YBX1. Interacts with TTN/titin. Mainly expressed in activated vascular endothelial cells. To a lower extent, also expressed in hepatoma cells.

The protein resides in the nucleus. In terms of biological role, may play an important role in endothelial cell activation. May act as a nuclear transcription factor that negatively regulates the expression of cardiac genes. Induction seems to be correlated with apoptotic cell death in hepatoma cells. This chain is Ankyrin repeat domain-containing protein 1 (ANKRD1), found in Homo sapiens (Human).